The chain runs to 72 residues: Conotoxin LiC53 (72 aa).

Residues 1–23 form the signal peptide; it reads MEKLTSLLLVAALLMLTQTLIQG. The propeptide occupies 24–41; it reads GGEDRPNKKFLQKIKSTA. Disulfide bonds link C45–C59, C52–C63, and C58–C68.

The protein belongs to the conotoxin O2 superfamily. Expressed by the venom duct.

It localises to the secreted. The protein is Conotoxin LiC53 of Conus lividus (Livid cone).